The following is a 180-amino-acid chain: Decaprenylphosphoryl-5-phosphoribose phosphatase (180 aa).

4 helical membrane-spanning segments follow: residues 31 to 51, 61 to 81, 116 to 136, and 139 to 159; these read ALSH…AGAL, LAVG…KRVV, VLLA…PMAL, and LVLG…GALV.

This sequence belongs to the PA-phosphatase related phosphoesterase family.

It localises to the cell membrane. It carries out the reaction trans,octa-cis-decaprenylphospho-beta-D-ribofuranose 5-phosphate + H2O = trans,octa-cis-decaprenylphospho-beta-D-ribofuranose + phosphate. It functions in the pathway cell wall biogenesis; cell wall polysaccharide biosynthesis. Functionally, phosphatase involved in the biosynthesis of decaprenylphosphoryl arabinose (DPA), which serves as the arabinose donor for the biosynthesis of arabinogalactan, the major mycobacterial cell wall polysaccharide. Catalyzes the dephosphorylation of decaprenylphosphoryl-5-phosphoribose (DPPR) to decaprenyl-phosphoribose (DPR). This chain is Decaprenylphosphoryl-5-phosphoribose phosphatase, found in Mycolicibacterium smegmatis (strain ATCC 700084 / mc(2)155) (Mycobacterium smegmatis).